Consider the following 108-residue polypeptide: UPF0145 protein MADE_1007770 (108 aa).

It belongs to the UPF0145 family.

This is UPF0145 protein MADE_1007770 from Alteromonas mediterranea (strain DSM 17117 / CIP 110805 / LMG 28347 / Deep ecotype).